Consider the following 238-residue polypeptide: Pyridoxine 5'-phosphate synthase (238 aa).

Asparagine 7 is a binding site for 3-amino-2-oxopropyl phosphate. 9–10 serves as a coordination point for 1-deoxy-D-xylulose 5-phosphate; sequence DH. Arginine 18 provides a ligand contact to 3-amino-2-oxopropyl phosphate. Histidine 43 acts as the Proton acceptor in catalysis. 2 residues coordinate 1-deoxy-D-xylulose 5-phosphate: arginine 45 and histidine 50. Catalysis depends on glutamate 70, which acts as the Proton acceptor. Threonine 100 is a 1-deoxy-D-xylulose 5-phosphate binding site. Histidine 190 functions as the Proton donor in the catalytic mechanism. 3-amino-2-oxopropyl phosphate is bound by residues glycine 191 and 212 to 213; that span reads GH.

It belongs to the PNP synthase family. Homooctamer; tetramer of dimers.

It localises to the cytoplasm. It carries out the reaction 3-amino-2-oxopropyl phosphate + 1-deoxy-D-xylulose 5-phosphate = pyridoxine 5'-phosphate + phosphate + 2 H2O + H(+). Its pathway is cofactor biosynthesis; pyridoxine 5'-phosphate biosynthesis; pyridoxine 5'-phosphate from D-erythrose 4-phosphate: step 5/5. Catalyzes the complicated ring closure reaction between the two acyclic compounds 1-deoxy-D-xylulose-5-phosphate (DXP) and 3-amino-2-oxopropyl phosphate (1-amino-acetone-3-phosphate or AAP) to form pyridoxine 5'-phosphate (PNP) and inorganic phosphate. The polypeptide is Pyridoxine 5'-phosphate synthase (Prochlorococcus marinus subsp. pastoris (strain CCMP1986 / NIES-2087 / MED4)).